Reading from the N-terminus, the 510-residue chain is NAD(P)H-quinone oxidoreductase subunit 2 A, chloroplastic (510 aa).

13 consecutive transmembrane segments (helical) span residues L24 to L44, I57 to F77, I99 to I119, M124 to C144, L149 to Y169, Y183 to G203, P227 to A247, W295 to I315, M323 to D343, Y354 to L374, A395 to F415, L418 to L438, and M484 to I504.

The protein belongs to the complex I subunit 2 family. In terms of assembly, NDH is composed of at least 16 different subunits, 5 of which are encoded in the nucleus.

It is found in the plastid. The protein localises to the chloroplast thylakoid membrane. It catalyses the reaction a plastoquinone + NADH + (n+1) H(+)(in) = a plastoquinol + NAD(+) + n H(+)(out). The catalysed reaction is a plastoquinone + NADPH + (n+1) H(+)(in) = a plastoquinol + NADP(+) + n H(+)(out). In terms of biological role, NDH shuttles electrons from NAD(P)H:plastoquinone, via FMN and iron-sulfur (Fe-S) centers, to quinones in the photosynthetic chain and possibly in a chloroplast respiratory chain. The immediate electron acceptor for the enzyme in this species is believed to be plastoquinone. Couples the redox reaction to proton translocation, and thus conserves the redox energy in a proton gradient. The protein is NAD(P)H-quinone oxidoreductase subunit 2 A, chloroplastic of Solanum bulbocastanum (Wild potato).